The chain runs to 257 residues: Small ribosomal subunit protein uS3 (257 aa).

Residues 39-112 (IRKFLNKKYN…EIVFNVVEVR (74 aa)) form the KH type-2 domain. Residues 217 to 257 (HEELRKERQSSASSNHGGGKRRPSRKGPRRSQEDAATEGGN) are disordered. Positions 234–245 (GGKRRPSRKGPR) are enriched in basic residues.

It belongs to the universal ribosomal protein uS3 family. In terms of assembly, part of the 30S ribosomal subunit. Forms a tight complex with proteins S10 and S14.

Binds the lower part of the 30S subunit head. Binds mRNA in the 70S ribosome, positioning it for translation. This is Small ribosomal subunit protein uS3 from Haploplasma axanthum (Acholeplasma axanthum).